Here is a 380-residue protein sequence, read N- to C-terminus: Cytochrome b (380 aa).

Helical transmembrane passes span 33–53, 77–98, 113–133, and 178–198; these read FGSL…FLAM, WLIR…FIHV, WNIG…GYVL, and FFAF…VHLL. His-83 and His-97 together coordinate heme b. Heme b-binding residues include His-182 and His-196. His-201 is a binding site for a ubiquinone. Helical transmembrane passes span 226-246, 288-308, 320-340, and 347-367; these read IKDL…VLFF, LGGV…PLLN, ITQA…WIGG, and FTLI…IFMP.

The protein belongs to the cytochrome b family. In terms of assembly, the cytochrome bc1 complex contains 11 subunits: 3 respiratory subunits (MT-CYB, CYC1 and UQCRFS1), 2 core proteins (UQCRC1 and UQCRC2) and 6 low-molecular weight proteins (UQCRH/QCR6, UQCRB/QCR7, UQCRQ/QCR8, UQCR10/QCR9, UQCR11/QCR10 and a cleavage product of UQCRFS1). This cytochrome bc1 complex then forms a dimer. Heme b serves as cofactor.

The protein resides in the mitochondrion inner membrane. In terms of biological role, component of the ubiquinol-cytochrome c reductase complex (complex III or cytochrome b-c1 complex) that is part of the mitochondrial respiratory chain. The b-c1 complex mediates electron transfer from ubiquinol to cytochrome c. Contributes to the generation of a proton gradient across the mitochondrial membrane that is then used for ATP synthesis. This chain is Cytochrome b (MT-CYB), found in Rhipidomys wetzeli (Wetzel's climbing mouse).